A 413-amino-acid chain; its full sequence is Multifunctional CCA protein (413 aa).

Positions 8 and 11 each coordinate ATP. Residues glycine 8 and arginine 11 each coordinate CTP. Residues aspartate 21 and aspartate 23 each contribute to the Mg(2+) site. Residues arginine 91, arginine 143, and arginine 146 each coordinate ATP. Residues arginine 91, arginine 143, and arginine 146 each contribute to the CTP site. In terms of domain architecture, HD spans 232–333 (TGVHVMMVID…VRLLERADAL (102 aa)).

Belongs to the tRNA nucleotidyltransferase/poly(A) polymerase family. Bacterial CCA-adding enzyme type 1 subfamily. As to quaternary structure, monomer. Can also form homodimers and oligomers. The cofactor is Mg(2+). Requires Ni(2+) as cofactor.

The enzyme catalyses a tRNA precursor + 2 CTP + ATP = a tRNA with a 3' CCA end + 3 diphosphate. It carries out the reaction a tRNA with a 3' CCA end + 2 CTP + ATP = a tRNA with a 3' CCACCA end + 3 diphosphate. Catalyzes the addition and repair of the essential 3'-terminal CCA sequence in tRNAs without using a nucleic acid template. Adds these three nucleotides in the order of C, C, and A to the tRNA nucleotide-73, using CTP and ATP as substrates and producing inorganic pyrophosphate. tRNA 3'-terminal CCA addition is required both for tRNA processing and repair. Also involved in tRNA surveillance by mediating tandem CCA addition to generate a CCACCA at the 3' terminus of unstable tRNAs. While stable tRNAs receive only 3'-terminal CCA, unstable tRNAs are marked with CCACCA and rapidly degraded. The sequence is that of Multifunctional CCA protein from Burkholderia pseudomallei (strain K96243).